We begin with the raw amino-acid sequence, 134 residues long: Rhoptry antigen protein (134 aa).

2 disordered regions span residues M21–K82 and Q96–L134. Residues K29–D38 show a composition bias toward polar residues. The segment covering E39 to G54 has biased composition (low complexity). Residues G57–M69 are compositionally biased toward basic and acidic residues. The span at P102–R113 shows a compositional bias: basic residues. The span at D114–K126 shows a compositional bias: basic and acidic residues.

The sequence is that of Rhoptry antigen protein from Plasmodium falciparum.